A 309-amino-acid polypeptide reads, in one-letter code: Ribosomal RNA small subunit methyltransferase H (309 aa).

S-adenosyl-L-methionine contacts are provided by residues 44–46 (GGH), Asp-62, Phe-102, Asp-118, and Gln-125. A disordered region spans residues 289 to 309 (LEQQRNSRARSAKLRVAARSS).

Belongs to the methyltransferase superfamily. RsmH family.

The protein resides in the cytoplasm. It catalyses the reaction cytidine(1402) in 16S rRNA + S-adenosyl-L-methionine = N(4)-methylcytidine(1402) in 16S rRNA + S-adenosyl-L-homocysteine + H(+). Functionally, specifically methylates the N4 position of cytidine in position 1402 (C1402) of 16S rRNA. This is Ribosomal RNA small subunit methyltransferase H from Synechococcus sp. (strain JA-3-3Ab) (Cyanobacteria bacterium Yellowstone A-Prime).